We begin with the raw amino-acid sequence, 365 residues long: MSRPVPNPGILDIAPYTPGKSPVAEPGRKVFKLSANETPFGPSPHAIAAYKSAADHLEDYPEGTSRILREAIGKAYGLDPDRIICGAGSDEILNLLAHTYLAPGDEAISSQHGFLVYPIATLANGAKNVVAPEKNLTTDVDAMLAAVTPNTKLVWLANPNNPTGTYIPFDEVKRLRAGLPSHVVLVLDAAYADYVMKNDYELGIELVSTTENTVLTHTFSKVHGLAALRIGWMFGPANIVDAVNRIRGPFNVSVPAQLAAVAAIQDTGHVERSRAHTDKWRNTLAEELPKLGLTVTRSVCNFVLIHFPTTKGKTAAEADAFLTQRGLVLRALNNYGLPHALRMTIGTDEANALVLENLREFMGQP.

The interval 1-21 is disordered; that stretch reads MSRPVPNPGILDIAPYTPGKS. An N6-(pyridoxal phosphate)lysine modification is found at lysine 221.

The protein belongs to the class-II pyridoxal-phosphate-dependent aminotransferase family. Histidinol-phosphate aminotransferase subfamily. As to quaternary structure, homodimer. Pyridoxal 5'-phosphate serves as cofactor.

It catalyses the reaction L-histidinol phosphate + 2-oxoglutarate = 3-(imidazol-4-yl)-2-oxopropyl phosphate + L-glutamate. Its pathway is amino-acid biosynthesis; L-histidine biosynthesis; L-histidine from 5-phospho-alpha-D-ribose 1-diphosphate: step 7/9. This is Histidinol-phosphate aminotransferase from Rhodopseudomonas palustris (strain ATCC BAA-98 / CGA009).